Reading from the N-terminus, the 356-residue chain is UDP-N-acetylglucosamine--N-acetylmuramyl-(pentapeptide) pyrophosphoryl-undecaprenol N-acetylglucosamine transferase (356 aa).

UDP-N-acetyl-alpha-D-glucosamine contacts are provided by residues 12–14 (TGG), Asn124, Arg163, Ser188, Ile242, and Gln287.

It belongs to the glycosyltransferase 28 family. MurG subfamily.

Its subcellular location is the cell inner membrane. It carries out the reaction di-trans,octa-cis-undecaprenyl diphospho-N-acetyl-alpha-D-muramoyl-L-alanyl-D-glutamyl-meso-2,6-diaminopimeloyl-D-alanyl-D-alanine + UDP-N-acetyl-alpha-D-glucosamine = di-trans,octa-cis-undecaprenyl diphospho-[N-acetyl-alpha-D-glucosaminyl-(1-&gt;4)]-N-acetyl-alpha-D-muramoyl-L-alanyl-D-glutamyl-meso-2,6-diaminopimeloyl-D-alanyl-D-alanine + UDP + H(+). Its pathway is cell wall biogenesis; peptidoglycan biosynthesis. In terms of biological role, cell wall formation. Catalyzes the transfer of a GlcNAc subunit on undecaprenyl-pyrophosphoryl-MurNAc-pentapeptide (lipid intermediate I) to form undecaprenyl-pyrophosphoryl-MurNAc-(pentapeptide)GlcNAc (lipid intermediate II). This is UDP-N-acetylglucosamine--N-acetylmuramyl-(pentapeptide) pyrophosphoryl-undecaprenol N-acetylglucosamine transferase from Pseudomonas syringae pv. syringae (strain B728a).